The following is a 1495-amino-acid chain: Collagen alpha-1(XVII) chain (1495 aa).

Positions 1 to 17 (MDSVTKKTRQDGSEVTE) are enriched in basic and acidic residues. Residues 1 to 138 (MDSVTKKTRQ…VRLQSASPSG (138 aa)) form a disordered region. Residues 1-435 (MDSVTKKTRQ…CGSCCSWWKW (435 aa)) are Cytoplasmic-facing. The tract at residues 1–535 (MDSVTKKTRQ…IERGYFRGER (535 aa)) is nonhelical region (NC16). The span at 19 to 32 (QGGSSSGLKTSSHT) shows a compositional bias: polar residues. A compositionally biased stretch (low complexity) spans 51-63 (SSGSGRLNSSSSG). 2 stretches are compositionally biased toward polar residues: residues 64-80 (YRQT…SPGS) and 95-104 (EGSSSANSSP). The helical; Signal-anchor for type II membrane protein transmembrane segment at 436 to 456 (LLGLLLAWLLLLGLLFGLIAL) threads the bilayer. At 457 to 1495 (AEEVRKLKSR…GRRRRRSVGV (1039 aa)) the chain is on the extracellular side. 7 disordered regions span residues 532–824 (RGER…EKGS), 847–999 (DLQG…SSSQ), 1160–1185 (EFSG…SSGI), 1201–1226 (SISG…TGLL), 1251–1278 (RSYI…LVAG), 1295–1336 (GGSI…GSYG), and 1396–1416 (MSYT…PGIS). The interval 536-1482 (GEPGMKGDMG…KGEKGEKGEQ (947 aa)) is triple-helical region. Low complexity-rich tracts occupy residues 702-711 (PGAKGPAGQA) and 761-773 (RPGA…APGK). Over residues 786 to 807 (PGPPGPPGPIGPTGPPGVPGPV) the composition is skewed to pro residues. Over residues 809-818 (PAGLPGQQGP) the composition is skewed to low complexity. Pro residues-rich tracts occupy residues 871–886 (PRGP…PPGR), 901–910 (PPGPPGPPGP), 946–955 (PPGPPGPPGP), 981–993 (PPGP…PPGP), 1167–1179 (PPGP…PPGI), 1208–1218 (PPGPPGPPGPP), and 1257–1269 (PPGP…PPGP). Over residues 1296–1308 (GSIGAEGSHGGSL) the composition is skewed to gly residues. Positions 1309–1336 (GASSSYGSSMSSSMSSYSASMGSDGSYG) are enriched in low complexity. The segment covering 1403-1413 (PPGPPGPPGPP) has biased composition (pro residues). An N-linked (GlcNAc...) asparagine glycan is attached at N1424. The segment at 1435 to 1495 (THGTVRGPPG…GRRRRRSVGV (61 aa)) is disordered. Residues 1472–1481 (PKGEKGEKGE) show a composition bias toward basic and acidic residues. The segment at 1483–1495 (MYSGRRRRRSVGV) is nonhelical region (NC1). The segment covering 1486–1495 (GRRRRRSVGV) has biased composition (basic residues).

Homotrimers of alpha 1(XVII)chains. In terms of processing, the intracellular/endo domain is disulfide-linked. Prolines at the third position of the tripeptide repeating unit (G-X-Y) are hydroxylated in some or all of the chains. Post-translationally, the ectodomain is shedded from the surface of keratinocytes resulting in a 120-kDa soluble form, also named as 120 kDa linear IgA disease antigen homolog. The shedding is mediated by membrane-bound metalloproteases. Cornea specific.

The protein localises to the cell junction. The protein resides in the hemidesmosome. It is found in the membrane. It localises to the secreted. Its subcellular location is the extracellular space. The protein localises to the extracellular matrix. The protein resides in the basement membrane. May play a role in the integrity of hemidesmosome and the attachment of basal keratinocytes to the underlying basement membrane. Its function is as follows. The 120 kDa linear IgA disease antigen homolog is an anchoring filament component involved in dermal-epidermal cohesion. This is Collagen alpha-1(XVII) chain (COL17A1) from Gallus gallus (Chicken).